The primary structure comprises 447 residues: Ribosomal protein uS12 methylthiotransferase RimO (447 aa).

The MTTase N-terminal domain maps to 4-114 (PKVGFVSLGC…VMEAVHEYVP (111 aa)). Residues cysteine 13, cysteine 49, cysteine 78, cysteine 147, cysteine 151, and cysteine 154 each contribute to the [4Fe-4S] cluster site. Positions 133–370 (LTPKHYAYLK…MQVQQQISAA (238 aa)) constitute a Radical SAM core domain. The TRAM domain maps to 373–443 (QKRIGQTMTV…EYDLFAKLIK (71 aa)).

The protein belongs to the methylthiotransferase family. RimO subfamily. [4Fe-4S] cluster serves as cofactor.

It is found in the cytoplasm. The enzyme catalyses L-aspartate(89)-[ribosomal protein uS12]-hydrogen + (sulfur carrier)-SH + AH2 + 2 S-adenosyl-L-methionine = 3-methylsulfanyl-L-aspartate(89)-[ribosomal protein uS12]-hydrogen + (sulfur carrier)-H + 5'-deoxyadenosine + L-methionine + A + S-adenosyl-L-homocysteine + 2 H(+). Catalyzes the methylthiolation of an aspartic acid residue of ribosomal protein uS12. The sequence is that of Ribosomal protein uS12 methylthiotransferase RimO from Acinetobacter baumannii (strain SDF).